Consider the following 154-residue polypeptide: Myoglobin (154 aa).

The region spanning 2–148 (GLSDGEWQLV…FRKDIAAKYK (147 aa)) is the Globin domain. Serine 4 is subject to Phosphoserine. Position 65 (histidine 65) interacts with nitrite. Histidine 65 contacts O2. Threonine 68 carries the post-translational modification Phosphothreonine. Histidine 94 is a binding site for heme b.

Belongs to the globin family. In terms of assembly, monomeric.

It is found in the cytoplasm. The protein localises to the sarcoplasm. It catalyses the reaction Fe(III)-heme b-[protein] + nitric oxide + H2O = Fe(II)-heme b-[protein] + nitrite + 2 H(+). The catalysed reaction is H2O2 + AH2 = A + 2 H2O. Functionally, monomeric heme protein which primary function is to store oxygen and facilitate its diffusion within muscle tissues. Reversibly binds oxygen through a pentacoordinated heme iron and enables its timely and efficient release as needed during periods of heightened demand. Depending on the oxidative conditions of tissues and cells, and in addition to its ability to bind oxygen, it also has a nitrite reductase activity whereby it regulates the production of bioactive nitric oxide. Under stress conditions, like hypoxia and anoxia, it also protects cells against reactive oxygen species thanks to its pseudoperoxidase activity. This Delphinus delphis (Short-beaked common dolphin) protein is Myoglobin (MB).